Reading from the N-terminus, the 276-residue chain is uncharacterized protein (276 aa).

10 consecutive transmembrane segments (helical) span residues 5 to 25 (IVLA…KYSV), 31 to 51 (IAIA…IIIL), 63 to 83 (VFAL…LGEV), 89 to 109 (VASV…AIFL), 119 to 139 (VGII…YANI), 142 to 162 (IALV…GKSL), 168 to 188 (PITL…PFLP), 200 to 220 (LIGS…LGWY), 231 to 251 (ASVF…ILLA), and 253 to 273 (PLTL…YIVV). 2 consecutive EamA domains span residues 12-133 (TFWG…VISE) and 150-274 (VAAA…IVVR).

Belongs to the EamA transporter family.

It localises to the cell membrane. This is an uncharacterized protein from Archaeoglobus fulgidus (strain ATCC 49558 / DSM 4304 / JCM 9628 / NBRC 100126 / VC-16).